Reading from the N-terminus, the 170-residue chain is Transcriptional repressor NrdR (170 aa).

Residues 3–34 (CPFCGTQDTKVVDSRLVSEGAQVRRRRTCIHC) fold into a zinc finger. The region spanning 49 to 139 (PKLIKSDGSR…VYRSFKDISE (91 aa)) is the ATP-cone domain. Positions 151-170 (SVSIPKSKKTAPESKKEDQA) are disordered. Residues 160-170 (TAPESKKEDQA) are compositionally biased toward basic and acidic residues.

The protein belongs to the NrdR family. The cofactor is Zn(2+).

Its function is as follows. Negatively regulates transcription of bacterial ribonucleotide reductase nrd genes and operons by binding to NrdR-boxes. This is Transcriptional repressor NrdR from Marinomonas sp. (strain MWYL1).